The chain runs to 517 residues: Protein AGENET DOMAIN (AGD)-CONTAINING P1 (517 aa).

The interval 1–35 (MLRPRRSLGVSSPAKQRKKAAPKNSMATRANRKRL) is disordered. Plant Agenet, chromatin-binding stretches follow at residues 37-111 (SYLK…PPMS) and 117-173 (KKIV…EWVD). The segment at 177 to 202 (KPPLEETEEEEDESEEDKLDDSEDEE) is disordered. Residues 181 to 202 (EETEEEEDESEEDKLDDSEDEE) show a composition bias toward acidic residues. Plant Agenet, chromatin-binding regions lie at residues 219-287 (QMFS…PRDE), 289-345 (IDFA…DWVD), 378-446 (QAFS…LESV), and 449-505 (SPFE…EWID).

Expressed ubiquitously during vegetative stage, in meristems (e.g. root tips and shoot apical meristem), and in ovules and young seeds during reproductive stage.

The protein localises to the nucleus. In terms of biological role, heterochromatin-binding protein that preferentially occupies long transposons and specifically recognizes the histone H3 'Lys-9' methylation (H3K9me) marks, with a stronger affinity for dimethylated H3K9 (H3K9me2). Required for transcriptional silencing, non-CG DNA methylation (e.g. CHG and CHH regions), and H3K9 dimethylation (H3K9me2) at some loci. Mediates heterochromatin phase separation and chromocenter formation. This Arabidopsis thaliana (Mouse-ear cress) protein is Protein AGENET DOMAIN (AGD)-CONTAINING P1.